Here is a 304-residue protein sequence, read N- to C-terminus: Large ribosomal subunit protein uL18z (304 aa).

Positions 285–304 (LNALNSSAGADDDDEEEDDE) are disordered. The segment covering 294–304 (ADDDDEEEDDE) has biased composition (acidic residues).

Belongs to the universal ribosomal protein uL18 family. In terms of assembly, component of the large ribosomal subunit (LSU).

The protein localises to the cytoplasm. Its subcellular location is the nucleus. In terms of biological role, component of the ribosome, a large ribonucleoprotein complex responsible for the synthesis of proteins in the cell. The small ribosomal subunit (SSU) binds messenger RNAs (mRNAs) and translates the encoded message by selecting cognate aminoacyl-transfer RNA (tRNA) molecules. The large subunit (LSU) contains the ribosomal catalytic site termed the peptidyl transferase center (PTC), which catalyzes the formation of peptide bonds, thereby polymerizing the amino acids delivered by tRNAs into a polypeptide chain. The nascent polypeptides leave the ribosome through a tunnel in the LSU and interact with protein factors that function in enzymatic processing, targeting, and the membrane insertion of nascent chains at the exit of the ribosomal tunnel. The chain is Large ribosomal subunit protein uL18z (RPL5A) from Oryza sativa subsp. japonica (Rice).